We begin with the raw amino-acid sequence, 271 residues long: 2,3,4,5-tetrahydropyridine-2,6-dicarboxylate N-succinyltransferase (271 aa).

Substrate contacts are provided by Arg102 and Asp139.

It belongs to the transferase hexapeptide repeat family. As to quaternary structure, homotrimer.

It localises to the cytoplasm. The catalysed reaction is (S)-2,3,4,5-tetrahydrodipicolinate + succinyl-CoA + H2O = (S)-2-succinylamino-6-oxoheptanedioate + CoA. It functions in the pathway amino-acid biosynthesis; L-lysine biosynthesis via DAP pathway; LL-2,6-diaminopimelate from (S)-tetrahydrodipicolinate (succinylase route): step 1/3. The chain is 2,3,4,5-tetrahydropyridine-2,6-dicarboxylate N-succinyltransferase from Coxiella burnetii (strain RSA 331 / Henzerling II).